The following is a 43-amino-acid chain: Protein PsbN (43 aa).

The helical transmembrane segment at 4–24 (ATFVAIFISCLLISFTGYALY) threads the bilayer.

The protein belongs to the PsbN family.

The protein resides in the plastid. The protein localises to the chloroplast thylakoid membrane. May play a role in photosystem I and II biogenesis. In Marchantia polymorpha (Common liverwort), this protein is Protein PsbN.